Here is a 259-residue protein sequence, read N- to C-terminus: Imidazole glycerol phosphate synthase subunit HisF (259 aa).

Residues Asp-11 and Asp-130 contribute to the active site.

Belongs to the HisA/HisF family. Heterodimer of HisH and HisF.

Its subcellular location is the cytoplasm. It carries out the reaction 5-[(5-phospho-1-deoxy-D-ribulos-1-ylimino)methylamino]-1-(5-phospho-beta-D-ribosyl)imidazole-4-carboxamide + L-glutamine = D-erythro-1-(imidazol-4-yl)glycerol 3-phosphate + 5-amino-1-(5-phospho-beta-D-ribosyl)imidazole-4-carboxamide + L-glutamate + H(+). It functions in the pathway amino-acid biosynthesis; L-histidine biosynthesis; L-histidine from 5-phospho-alpha-D-ribose 1-diphosphate: step 5/9. IGPS catalyzes the conversion of PRFAR and glutamine to IGP, AICAR and glutamate. The HisF subunit catalyzes the cyclization activity that produces IGP and AICAR from PRFAR using the ammonia provided by the HisH subunit. The sequence is that of Imidazole glycerol phosphate synthase subunit HisF from Nitratidesulfovibrio vulgaris (strain DP4) (Desulfovibrio vulgaris).